Reading from the N-terminus, the 132-residue chain is Small ribosomal subunit protein uS12 (132 aa).

The residue at position 89 (aspartate 89) is a 3-methylthioaspartic acid. Residues 102-132 are disordered; the sequence is LDTSGVADRKQSRSKYGAKVPKAGAAPAKKK. Positions 118–132 are enriched in low complexity; it reads GAKVPKAGAAPAKKK.

It belongs to the universal ribosomal protein uS12 family. In terms of assembly, part of the 30S ribosomal subunit. Contacts proteins S8 and S17. May interact with IF1 in the 30S initiation complex.

Functionally, with S4 and S5 plays an important role in translational accuracy. Its function is as follows. Interacts with and stabilizes bases of the 16S rRNA that are involved in tRNA selection in the A site and with the mRNA backbone. Located at the interface of the 30S and 50S subunits, it traverses the body of the 30S subunit contacting proteins on the other side and probably holding the rRNA structure together. The combined cluster of proteins S8, S12 and S17 appears to hold together the shoulder and platform of the 30S subunit. The chain is Small ribosomal subunit protein uS12 from Chlorobaculum tepidum (strain ATCC 49652 / DSM 12025 / NBRC 103806 / TLS) (Chlorobium tepidum).